The following is a 451-amino-acid chain: Probable beta-1,4-xylosyltransferase GT43E (451 aa).

Residues 1-88 lie on the Cytoplasmic side of the membrane; that stretch reads MVSSRRNTGG…SKSRGLSCKR (88 aa). Residues 89-109 traverse the membrane as a helical; Signal-anchor for type II membrane protein segment; it reads LAFHLFVCFMVGIFIGFMPFF. Over 110–451 the chain is Lumenal; the sequence is SVDVSQKIVS…KNLDAVIPVT (342 aa). 2 N-linked (GlcNAc...) asparagine glycosylation sites follow: asparagine 260 and asparagine 366.

It belongs to the glycosyltransferase 43 family.

The protein resides in the golgi apparatus membrane. In terms of biological role, probable beta-1,4-xylosyltransferase involved in xylan biosynthesis in cell walls. This chain is Probable beta-1,4-xylosyltransferase GT43E, found in Oryza sativa subsp. japonica (Rice).